We begin with the raw amino-acid sequence, 565 residues long: Transmembrane 7 superfamily member 3 (565 aa).

A signal peptide spans 1-21; it reads MWRLRLLVLAVLAAGSAEAQA. N-linked (GlcNAc...) asparagine glycans are attached at residues asparagine 22, asparagine 56, asparagine 70, and asparagine 259. A run of 7 helical transmembrane segments spans residues 287–307, 311–331, 341–361, 364–384, 402–422, 427–447, and 478–498; these read VSTK…CFFG, WKTE…YILI, VRLV…VASW, FGIL…LVSS, VFWV…LGCL, ILAC…SYMF, and NDYI…TLQI.

The protein resides in the cell membrane. Functionally, involved in the inhibition of cytokine-induced death of pancreatic beta cells. Involved in the promotion of insulin secretion from pancreatic beta cells. Is a downstream transcriptional target of p53/TP53, and acts as a pro-survival homeostatic factor that attenuates the development of cellular stress. Maintains protein homeostasis and promotes cell survival through attenuation of endoplasmic reticulum (ER) stress and the subsequent induction of unfolded protein response (UPR). This chain is Transmembrane 7 superfamily member 3 (Tm7sf3), found in Rattus norvegicus (Rat).